The sequence spans 350 residues: Melatonin receptor type 1A-A (350 aa).

Residues 1–29 (MFMNGSSLNSSALDPSEQALQRPPWVTTT) are Extracellular-facing. N-linked (GlcNAc...) asparagine glycosylation is found at asparagine 4 and asparagine 9. The helical transmembrane segment at 30–50 (LGCFLIFTIVVDILGNLLVIF) threads the bilayer. At 51–63 (SVYRNKKLQNAGN) the chain is on the cytoplasmic side. The chain crosses the membrane as a helical span at residues 64–84 (IFVVSLAVADLVVAIYPYPLV). The Extracellular segment spans residues 85–101 (LTSIFHRGWNLGYMHCQ). Cysteines 100 and 177 form a disulfide. A helical transmembrane segment spans residues 102–122 (ISGFLMGVSVIGSIFNITGIA). Residues 123–144 (INCYCYICHSLKYDKLYSDKNS) are Cytoplasmic-facing. Residues 145–165 (VCYVLLIWALTVLAIVPNLFV) form a helical membrane-spanning segment. Residues 166-187 (GSLQYDPRVYSCTFEQSASSAY) are Extracellular-facing. The chain crosses the membrane as a helical span at residues 188-208 (TIAVVFFHFILPIMIVTYCYL). At 209–240 (RIWVLVIQVRRRVKNDNRPKITPHDVRNFVTM) the chain is on the cytoplasmic side. The helical transmembrane segment at 241–261 (FVVFVLFAVCWAPLNFIGLAV) threads the bilayer. At 262–267 (AISPER) the chain is on the extracellular side. A helical membrane pass occupies residues 268-288 (VVPLIPEWLFVASYFMAYFNS). Topologically, residues 289 to 350 (CLNAIVYGVL…NNNQVKVDSV (62 aa)) are cytoplasmic.

This sequence belongs to the G-protein coupled receptor 1 family.

It localises to the cell membrane. Its function is as follows. High affinity receptor for melatonin. The activity of this receptor is mediated by pertussis toxin sensitive G proteins that inhibits adenylate cyclase activity. In Danio rerio (Zebrafish), this protein is Melatonin receptor type 1A-A (mtnr1aa).